Reading from the N-terminus, the 159-residue chain is GDP-mannose mannosyl hydrolase (159 aa).

Substrate-binding positions include 2-3 (FL), phenylalanine 8, and arginine 36. In terms of domain architecture, Nudix hydrolase spans 13-153 (RSTPLVSLDF…SRAYFLAEKR (141 aa)). The Mg(2+) site is built by glycine 49, glutamate 69, and glutamine 122. A Nudix box motif is present at residues 50 to 71 (GRVQKDETLEAAFERLTMAELG).

In terms of assembly, homodimer. Mg(2+) is required as a cofactor.

The catalysed reaction is GDP-alpha-D-mannose + H2O = D-mannose + GDP + H(+). Its function is as follows. Hydrolyzes both GDP-mannose and GDP-glucose. Could participate in the regulation of cell wall biosynthesis by influencing the concentration of GDP-mannose or GDP-glucose in the cell. Might also be involved in the biosynthesis of the slime polysaccharide colanic acid. The chain is GDP-mannose mannosyl hydrolase from Escherichia coli (strain K12).